Here is a 495-residue protein sequence, read N- to C-terminus: UDP-N-acetylmuramoyl-L-alanyl-D-glutamate--2,6-diaminopimelate ligase (495 aa).

UDP-N-acetyl-alpha-D-muramoyl-L-alanyl-D-glutamate-binding positions include L28, S30, and 45 to 47 (HRV). 117 to 123 (GTNGKTT) provides a ligand contact to ATP. UDP-N-acetyl-alpha-D-muramoyl-L-alanyl-D-glutamate contacts are provided by residues N158, 159-160 (TT), S186, Q192, and R194. K226 is subject to N6-carboxylysine. Meso-2,6-diaminopimelate contacts are provided by residues R394, 418 to 421 (DNPR), G469, and E473. Residues 418 to 421 (DNPR) carry the Meso-diaminopimelate recognition motif motif.

The protein belongs to the MurCDEF family. MurE subfamily. Requires Mg(2+) as cofactor. Post-translationally, carboxylation is probably crucial for Mg(2+) binding and, consequently, for the gamma-phosphate positioning of ATP.

It localises to the cytoplasm. The catalysed reaction is UDP-N-acetyl-alpha-D-muramoyl-L-alanyl-D-glutamate + meso-2,6-diaminopimelate + ATP = UDP-N-acetyl-alpha-D-muramoyl-L-alanyl-gamma-D-glutamyl-meso-2,6-diaminopimelate + ADP + phosphate + H(+). The protein operates within cell wall biogenesis; peptidoglycan biosynthesis. Its function is as follows. Catalyzes the addition of meso-diaminopimelic acid to the nucleotide precursor UDP-N-acetylmuramoyl-L-alanyl-D-glutamate (UMAG) in the biosynthesis of bacterial cell-wall peptidoglycan. The protein is UDP-N-acetylmuramoyl-L-alanyl-D-glutamate--2,6-diaminopimelate ligase of Histophilus somni (strain 129Pt) (Haemophilus somnus).